Consider the following 509-residue polypeptide: L-arabinose isomerase (509 aa).

The Mn(2+) site is built by glutamate 313, glutamate 340, histidine 357, and histidine 456.

This sequence belongs to the arabinose isomerase family. Mn(2+) serves as cofactor.

It catalyses the reaction beta-L-arabinopyranose = L-ribulose. It participates in carbohydrate degradation; L-arabinose degradation via L-ribulose; D-xylulose 5-phosphate from L-arabinose (bacterial route): step 1/3. Functionally, catalyzes the conversion of L-arabinose to L-ribulose. This Bacteroides thetaiotaomicron (strain ATCC 29148 / DSM 2079 / JCM 5827 / CCUG 10774 / NCTC 10582 / VPI-5482 / E50) protein is L-arabinose isomerase.